Consider the following 346-residue polypeptide: RISC-loading complex subunit tarbp2 (346 aa).

DRBM domains follow at residues 30 to 97 (TPIS…MLKG), 139 to 207 (NPVG…RIHD), and 273 to 341 (NFCS…YLKI).

Belongs to the TARBP2 family. In terms of assembly, self-associates. Component of the RISC loading complex (RLC), or micro-RNA (miRNA) loading complex (miRLC), which is composed of dicer1, ago2 and tarbp2. Note that the trimeric RLC/miRLC is also referred to as RISC.

The protein resides in the cytoplasm. Its function is as follows. Required for formation of the RNA induced silencing complex (RISC). Component of the RISC loading complex (RLC), also known as the micro-RNA (miRNA) loading complex (miRLC), which is composed of dicer1, ago2 and tarbp2. Within the RLC/miRLC, dicer1 and tarbp2 are required to process precursor miRNAs (pre-miRNAs) to mature miRNAs and then load them onto ago2. ago2 bound to the mature miRNA constitutes the minimal RISC and may subsequently dissociate from dicer1 and tarbp2. May also play a role in the production of short interfering RNAs (siRNAs) from double-stranded RNA (dsRNA) by dicer1. Binds in vitro to the PRM1 3'-UTR. Seems to act as a repressor of translation. For some pre-miRNA substrates, may also alter the choice of cleavage site by DICER1. In Danio rerio (Zebrafish), this protein is RISC-loading complex subunit tarbp2 (tarbp2).